We begin with the raw amino-acid sequence, 271 residues long: Enolase-phosphatase E1 (271 aa).

Asp18 and Glu20 together coordinate Mg(2+). Residues 144 to 145 (SS) and Lys194 contribute to the substrate site. Mg(2+) is bound at residue Asp221.

This sequence belongs to the HAD-like hydrolase superfamily. MasA/MtnC family. As to quaternary structure, monomer. Requires Mg(2+) as cofactor.

It is found in the cytoplasm. Its subcellular location is the nucleus. The enzyme catalyses 5-methylsulfanyl-2,3-dioxopentyl phosphate + H2O = 1,2-dihydroxy-5-(methylsulfanyl)pent-1-en-3-one + phosphate. It functions in the pathway amino-acid biosynthesis; L-methionine biosynthesis via salvage pathway; L-methionine from S-methyl-5-thio-alpha-D-ribose 1-phosphate: step 3/6. The protein operates within amino-acid biosynthesis; L-methionine biosynthesis via salvage pathway; L-methionine from S-methyl-5-thio-alpha-D-ribose 1-phosphate: step 4/6. Its function is as follows. Bifunctional enzyme that catalyzes the enolization of 2,3-diketo-5-methylthiopentyl-1-phosphate (DK-MTP-1-P) into the intermediate 2-hydroxy-3-keto-5-methylthiopentenyl-1-phosphate (HK-MTPenyl-1-P), which is then dephosphorylated to form the acireductone 1,2-dihydroxy-3-keto-5-methylthiopentene (DHK-MTPene). The chain is Enolase-phosphatase E1 from Candida albicans (strain WO-1) (Yeast).